A 363-amino-acid chain; its full sequence is tRNA N6-adenosine threonylcarbamoyltransferase (363 aa).

Fe cation contacts are provided by His121 and His125. Substrate is bound by residues 143-147 (LASGG), Asp176, Gly189, and Asn287. Position 315 (Asp315) interacts with Fe cation.

Belongs to the KAE1 / TsaD family. Fe(2+) is required as a cofactor.

The protein localises to the cytoplasm. The catalysed reaction is L-threonylcarbamoyladenylate + adenosine(37) in tRNA = N(6)-L-threonylcarbamoyladenosine(37) in tRNA + AMP + H(+). Required for the formation of a threonylcarbamoyl group on adenosine at position 37 (t(6)A37) in tRNAs that read codons beginning with adenine. Is involved in the transfer of the threonylcarbamoyl moiety of threonylcarbamoyl-AMP (TC-AMP) to the N6 group of A37, together with TsaE and TsaB. TsaD likely plays a direct catalytic role in this reaction. The chain is tRNA N6-adenosine threonylcarbamoyltransferase from Rhodopseudomonas palustris (strain TIE-1).